The following is a 618-amino-acid chain: Pyocin-S1 (618 aa).

Belongs to the colicin/pyosin nuclease family. In terms of assembly, purified pyocin S1 makes up a complex of the two (large and small) proteins. The large protein, but not the pyocin complex, shows in vitro DNase activity.

In terms of biological role, causes breakdown of chromosomal DNA as well as complete inhibition of lipid synthesis in sensitive cells. This chain is Pyocin-S1 (pys1), found in Pseudomonas aeruginosa.